The primary structure comprises 325 residues: Holliday junction branch migration complex subunit RuvB (325 aa).

A large ATPase domain (RuvB-L) region spans residues 1 to 172; the sequence is MENNELLDIT…FGVVFRLEFY (172 aa). ATP-binding positions include Leu-11, Arg-12, Gly-53, Lys-56, Thr-57, Thr-58, 119–121, Arg-162, Tyr-172, and Arg-209; that span reads EDF. Thr-57 is a binding site for Mg(2+). A small ATPAse domain (RuvB-S) region spans residues 173-243; that stretch reads NSEELKEIVK…IAQEALIAMD (71 aa). The head domain (RuvB-H) stretch occupies residues 246-325; it reads DYGLDDMDRK…LKRKIPERLF (80 aa). DNA is bound by residues Arg-301 and Arg-306.

The protein belongs to the RuvB family. In terms of assembly, homohexamer. Forms an RuvA(8)-RuvB(12)-Holliday junction (HJ) complex. HJ DNA is sandwiched between 2 RuvA tetramers; dsDNA enters through RuvA and exits via RuvB. An RuvB hexamer assembles on each DNA strand where it exits the tetramer. Each RuvB hexamer is contacted by two RuvA subunits (via domain III) on 2 adjacent RuvB subunits; this complex drives branch migration. In the full resolvosome a probable DNA-RuvA(4)-RuvB(12)-RuvC(2) complex forms which resolves the HJ.

The protein localises to the cytoplasm. The enzyme catalyses ATP + H2O = ADP + phosphate + H(+). In terms of biological role, the RuvA-RuvB-RuvC complex processes Holliday junction (HJ) DNA during genetic recombination and DNA repair, while the RuvA-RuvB complex plays an important role in the rescue of blocked DNA replication forks via replication fork reversal (RFR). RuvA specifically binds to HJ cruciform DNA, conferring on it an open structure. The RuvB hexamer acts as an ATP-dependent pump, pulling dsDNA into and through the RuvAB complex. RuvB forms 2 homohexamers on either side of HJ DNA bound by 1 or 2 RuvA tetramers; 4 subunits per hexamer contact DNA at a time. Coordinated motions by a converter formed by DNA-disengaged RuvB subunits stimulates ATP hydrolysis and nucleotide exchange. Immobilization of the converter enables RuvB to convert the ATP-contained energy into a lever motion, pulling 2 nucleotides of DNA out of the RuvA tetramer per ATP hydrolyzed, thus driving DNA branch migration. The RuvB motors rotate together with the DNA substrate, which together with the progressing nucleotide cycle form the mechanistic basis for DNA recombination by continuous HJ branch migration. Branch migration allows RuvC to scan DNA until it finds its consensus sequence, where it cleaves and resolves cruciform DNA. In Thermodesulfovibrio yellowstonii (strain ATCC 51303 / DSM 11347 / YP87), this protein is Holliday junction branch migration complex subunit RuvB.